Here is a 433-residue protein sequence, read N- to C-terminus: Trigger factor (433 aa).

In terms of domain architecture, PPIase FKBP-type spans 165-250 (GDSAIIDFEG…LHNIQEKVKV (86 aa)).

Belongs to the FKBP-type PPIase family. Tig subfamily.

It localises to the cytoplasm. It carries out the reaction [protein]-peptidylproline (omega=180) = [protein]-peptidylproline (omega=0). Its function is as follows. Involved in protein export. Acts as a chaperone by maintaining the newly synthesized protein in an open conformation. Functions as a peptidyl-prolyl cis-trans isomerase. This chain is Trigger factor, found in Sulfurimonas denitrificans (strain ATCC 33889 / DSM 1251) (Thiomicrospira denitrificans (strain ATCC 33889 / DSM 1251)).